The primary structure comprises 278 residues: Glucosamine-6-phosphate deaminase (278 aa).

D72 (proton acceptor; for enolization step) is an active-site residue. D141 serves as the catalytic For ring-opening step. Residue H143 is the Proton acceptor; for ring-opening step of the active site. E148 acts as the For ring-opening step in catalysis.

This sequence belongs to the glucosamine/galactosamine-6-phosphate isomerase family. As to quaternary structure, homohexamer.

It localises to the cytoplasm. It carries out the reaction alpha-D-glucosamine 6-phosphate + H2O = beta-D-fructose 6-phosphate + NH4(+). It functions in the pathway nucleotide-sugar biosynthesis; UDP-N-acetyl-alpha-D-glucosamine biosynthesis; alpha-D-glucosamine 6-phosphate from D-fructose 6-phosphate: step 1/1. Its function is as follows. Catalyzes the reversible conversion of alpha-D-glucosamine 6-phosphate (GlcN-6P) into beta-D-fructose 6-phosphate (Fru-6P) and ammonium ion, a regulatory reaction step in de novo uridine diphosphate-N-acetyl-alpha-D-glucosamine (UDP-GlcNAc) biosynthesis via hexosamine pathway. This chain is Glucosamine-6-phosphate deaminase (Gnpda1), found in Aedes aegypti (Yellowfever mosquito).